The following is a 423-amino-acid chain: Methylenetetrahydrofolate--tRNA-(uracil-5-)-methyltransferase TrmFO 2 (423 aa).

8 to 13 (GAGLSG) is an FAD binding site.

The protein belongs to the MnmG family. TrmFO subfamily. The cofactor is FAD.

It localises to the cytoplasm. The catalysed reaction is uridine(54) in tRNA + (6R)-5,10-methylene-5,6,7,8-tetrahydrofolate + NADH + H(+) = 5-methyluridine(54) in tRNA + (6S)-5,6,7,8-tetrahydrofolate + NAD(+). It catalyses the reaction uridine(54) in tRNA + (6R)-5,10-methylene-5,6,7,8-tetrahydrofolate + NADPH + H(+) = 5-methyluridine(54) in tRNA + (6S)-5,6,7,8-tetrahydrofolate + NADP(+). In terms of biological role, catalyzes the folate-dependent formation of 5-methyl-uridine at position 54 (M-5-U54) in all tRNAs. The polypeptide is Methylenetetrahydrofolate--tRNA-(uracil-5-)-methyltransferase TrmFO 2 (Mycoplasma capricolum subsp. capricolum (strain California kid / ATCC 27343 / NCTC 10154)).